The sequence spans 117 residues: UPF0342 protein lmo2223 (117 aa).

It belongs to the UPF0342 family.

In Listeria monocytogenes serovar 1/2a (strain ATCC BAA-679 / EGD-e), this protein is UPF0342 protein lmo2223.